The following is a 129-amino-acid chain: Phenazine antibiotic resistance protein EhpR (129 aa).

One can recognise a VOC domain in the interval 10 to 128; it reads TPNLQLVYVS…DGHIIRVCPL (119 aa). D-alanylgriseoluteate-binding positions include 42 to 43 and Trp57; that span reads RY.

As to quaternary structure, homodimer.

Required for resistance to the phenazine antibiotic D-alanylgriseoluteic acid (AGA), an antibiotic produced by E.agglomerans itself, and thus protects the bacterium against phenazine toxicity. Probably binds AGA and acts as a chaperone that works in tandem with a membrane transporter for subsequent antibiotic secretion. The sequence is that of Phenazine antibiotic resistance protein EhpR from Enterobacter agglomerans (Erwinia herbicola).